The chain runs to 200 residues: NADH-quinone oxidoreductase subunit C (200 aa).

Belongs to the complex I 30 kDa subunit family. As to quaternary structure, NDH-1 is composed of 14 different subunits. Subunits NuoB, C, D, E, F, and G constitute the peripheral sector of the complex.

Its subcellular location is the cell inner membrane. The catalysed reaction is a quinone + NADH + 5 H(+)(in) = a quinol + NAD(+) + 4 H(+)(out). Its function is as follows. NDH-1 shuttles electrons from NADH, via FMN and iron-sulfur (Fe-S) centers, to quinones in the respiratory chain. The immediate electron acceptor for the enzyme in this species is believed to be ubiquinone. Couples the redox reaction to proton translocation (for every two electrons transferred, four hydrogen ions are translocated across the cytoplasmic membrane), and thus conserves the redox energy in a proton gradient. In Burkholderia ambifaria (strain MC40-6), this protein is NADH-quinone oxidoreductase subunit C.